A 257-amino-acid polypeptide reads, in one-letter code: V-type proton ATPase subunit D (257 aa).

The tract at residues 215 to 257 (KEQEAAQKALEGPGPGEDAAHSENNPPRNLLASEEDNLPVLFN) is disordered.

The protein belongs to the V-ATPase D subunit family. V-ATPase is a heteromultimeric enzyme made up of two complexes: the ATP-hydrolytic V1 complex and the proton translocation V0 complex. The V1 complex consists of three catalytic AB heterodimers that form a heterohexamer, three peripheral stalks each consisting of EG heterodimers, one central rotor including subunits D and F, and the regulatory subunits C and H. The proton translocation complex V0 consists of the proton transport subunit a, a ring of proteolipid subunits c9c'', rotary subunit d, subunits e and f, and the accessory subunits vah-19/Ac45 and vah-20/PRR.

Functionally, subunit of the V1 complex of vacuolar(H+)-ATPase (V-ATPase), a multisubunit enzyme composed of a peripheral complex (V1) that hydrolyzes ATP and a membrane integral complex (V0) that translocates protons. V-ATPase is responsible for acidifying and maintaining the pH of intracellular compartments and in some cell types, is targeted to the plasma membrane, where it is responsible for acidifying the extracellular environment. The sequence is that of V-type proton ATPase subunit D from Caenorhabditis elegans.